Consider the following 65-residue polypeptide: Large ribosomal subunit protein bL35 (65 aa).

It belongs to the bacterial ribosomal protein bL35 family.

The protein is Large ribosomal subunit protein bL35 of Thiobacillus denitrificans (strain ATCC 25259 / T1).